The sequence spans 555 residues: Putative ankyrin repeat protein L283 (555 aa).

4 ANK repeats span residues threonine 364–isoleucine 389, valine 390–glutamate 420, isoleucine 422–cysteine 447, and glycine 455–lysine 488.

This chain is Putative ankyrin repeat protein L283, found in Acanthamoeba polyphaga mimivirus (APMV).